Consider the following 231-residue polypeptide: Ureidoacrylate amidohydrolase RutB (231 aa).

D25 acts as the Proton acceptor in catalysis. The active site involves K134. C167 (nucleophile) is an active-site residue.

Belongs to the isochorismatase family. RutB subfamily.

It catalyses the reaction (Z)-3-ureidoacrylate + H2O + H(+) = (Z)-3-aminoacrylate + NH4(+) + CO2. The catalysed reaction is (Z)-3-ureidoacrylate + H2O = (Z)-3-aminoacrylate + carbamate + H(+). The enzyme catalyses (Z)-2-methylureidoacrylate + H2O + H(+) = (Z)-2-methylaminoacrylate + NH4(+) + CO2. Functionally, hydrolyzes ureidoacrylate to form aminoacrylate and carbamate. The carbamate hydrolyzes spontaneously, thereby releasing one of the nitrogen atoms of the pyrimidine ring as ammonia and one of its carbon atoms as CO2. The chain is Ureidoacrylate amidohydrolase RutB from Escherichia coli O139:H28 (strain E24377A / ETEC).